The following is a 482-amino-acid chain: Spore germination protein A1 (482 aa).

The next 6 membrane-spanning stretches (helical) occupy residues 242–262, 284–304, 321–341, 351–371, 373–393, and 406–426; these read VAILVDSSPFVLLVPVSLGIL, FASIFITLFLSSIYITLVSFH, ENVPFPPIFEALLMEVTIELL, PLGQTIGLVGGVVIGQAAVEA, LVSSILVIVVSVIALASFTVP, and FISMFSAAILGLYGIILFMLV.

Belongs to the GerABKA family.

The protein resides in the cell membrane. Functionally, forms a complex at the inner spore membrane which acts as a receptor for L-alanine, thus is involved in the stimulation of germination in response to alanine. Can stimulate germination in the absence of GerD and GerK gene products (fructose and glucose receptors, respectively), but the response is improved in their presence. In Bacillus subtilis (strain 168), this protein is Spore germination protein A1 (gerAA).